The primary structure comprises 419 residues: Light-independent protochlorophyllide reductase subunit N (419 aa).

Cys17, Cys42, and Cys103 together coordinate [4Fe-4S] cluster.

It belongs to the BchN/ChlN family. In terms of assembly, protochlorophyllide reductase is composed of three subunits; ChlL, ChlN and ChlB. Forms a heterotetramer of two ChlB and two ChlN subunits. It depends on [4Fe-4S] cluster as a cofactor.

The enzyme catalyses chlorophyllide a + oxidized 2[4Fe-4S]-[ferredoxin] + 2 ADP + 2 phosphate = protochlorophyllide a + reduced 2[4Fe-4S]-[ferredoxin] + 2 ATP + 2 H2O. It functions in the pathway porphyrin-containing compound metabolism; chlorophyll biosynthesis (light-independent). Component of the dark-operative protochlorophyllide reductase (DPOR) that uses Mg-ATP and reduced ferredoxin to reduce ring D of protochlorophyllide (Pchlide) to form chlorophyllide a (Chlide). This reaction is light-independent. The NB-protein (ChlN-ChlB) is the catalytic component of the complex. The protein is Light-independent protochlorophyllide reductase subunit N of Prochlorococcus marinus (strain NATL1A).